The following is an 80-amino-acid chain: UPF0270 protein ASA_3305 (80 aa).

The protein belongs to the UPF0270 family.

This Aeromonas salmonicida (strain A449) protein is UPF0270 protein ASA_3305.